The primary structure comprises 125 residues: uncharacterized protein (125 aa).

Residues 45–110 form the Cupin type-2 domain; it reads IVPVGSKTLL…IGNVPLKILC (66 aa).

This is an uncharacterized protein from Methanocaldococcus jannaschii (strain ATCC 43067 / DSM 2661 / JAL-1 / JCM 10045 / NBRC 100440) (Methanococcus jannaschii).